Consider the following 238-residue polypeptide: N-methyltransferase vrtF (238 aa).

This sequence belongs to the methyltransferase superfamily.

It functions in the pathway secondary metabolite biosynthesis; terpenoid biosynthesis. Functionally, N-methyltransferase; part of the gene cluster that mediates the biosynthesis of viridicatumtoxin, a tetracycline-like fungal meroterpenoid with a unique, fused spirobicyclic ring system. The first step of the pathway is the production of the malonamoyl-CoA starter unit for the polyketide synthase vrtA. The aldolase vrtJ may be involved in the synthesis of the malonamate substrate for malonamoyl-CoA synthetase vrtB. The polyketide synthase vrtA then may utilize the malonamoyl-CoA starter unit, followed by sequential condensation of eight malonyl-CoA units to form the polyketide backbone. The cyclization of the last ring could be mediated by the lactamase-like protein vrtG. The proposed post-PKS tailoring steps are a hydroxylation at C5 catalyzed the cytochrome P450 monooxygenase vrtE, a hydroxylation at C12a catalyzed by VrtH and/or VrtI, and an O-methylation by the O-methyltransferase vrtF. VrtC is then proposed to catalyze the transfer of a geranyl group synthesized by vrtD to the aromatic C ring of the tetracyclic polyketide intermediate of viridicatumtoxin to yield previridicatumtoxin. Finally, the cytochrome P450 monooxygenase vrtK catalyzes the spirocyclization of the geranyl moiety of previridicatumtoxin to afford viridicatumtoxin. The polypeptide is N-methyltransferase vrtF (Penicillium aethiopicum).